The following is a 397-amino-acid chain: Elongation factor Tu (397 aa).

The region spanning 10–207 (KPHVNIGTIG…ACDSYIPEPQ (198 aa)) is the tr-type G domain. Residues 19–26 (GHIDHGKT) are G1. Residue 19–26 (GHIDHGKT) coordinates GTP. A Mg(2+)-binding site is contributed by T26. Residues 60-64 (GITIA) form a G2 region. Residues 81-84 (DCPG) form a G3 region. GTP is bound by residues 81 to 85 (DCPGH) and 136 to 139 (NKCD). Residues 136–139 (NKCD) are G4. A G5 region spans residues 174–176 (SAL).

Belongs to the TRAFAC class translation factor GTPase superfamily. Classic translation factor GTPase family. EF-Tu/EF-1A subfamily. As to quaternary structure, monomer.

It localises to the cytoplasm. It carries out the reaction GTP + H2O = GDP + phosphate + H(+). Functionally, GTP hydrolase that promotes the GTP-dependent binding of aminoacyl-tRNA to the A-site of ribosomes during protein biosynthesis. The protein is Elongation factor Tu of Nitratidesulfovibrio vulgaris (strain ATCC 29579 / DSM 644 / CCUG 34227 / NCIMB 8303 / VKM B-1760 / Hildenborough) (Desulfovibrio vulgaris).